We begin with the raw amino-acid sequence, 92 residues long: Small ribosomal subunit protein uS19 (92 aa).

Belongs to the universal ribosomal protein uS19 family.

Protein S19 forms a complex with S13 that binds strongly to the 16S ribosomal RNA. The protein is Small ribosomal subunit protein uS19 of Acaryochloris marina (strain MBIC 11017).